Reading from the N-terminus, the 207-residue chain is Large ribosomal subunit protein uL4 (207 aa).

The protein belongs to the universal ribosomal protein uL4 family. As to quaternary structure, part of the 50S ribosomal subunit.

In terms of biological role, one of the primary rRNA binding proteins, this protein initially binds near the 5'-end of the 23S rRNA. It is important during the early stages of 50S assembly. It makes multiple contacts with different domains of the 23S rRNA in the assembled 50S subunit and ribosome. Functionally, forms part of the polypeptide exit tunnel. In Rickettsia peacockii (strain Rustic), this protein is Large ribosomal subunit protein uL4.